The sequence spans 261 residues: Glucose 1-dehydrogenase A (261 aa).

An NADP(+)-binding site is contributed by 11 to 35; it reads VITGGSTGLGRAMAVRFGQEEAKVV. A substrate-binding site is contributed by Ser-145. Tyr-158 (proton acceptor) is an active-site residue.

This sequence belongs to the short-chain dehydrogenases/reductases (SDR) family. Homotetramer.

The catalysed reaction is D-glucose + NAD(+) = D-glucono-1,5-lactone + NADH + H(+). It carries out the reaction D-glucose + NADP(+) = D-glucono-1,5-lactone + NADPH + H(+). The sequence is that of Glucose 1-dehydrogenase A (gdhA) from Priestia megaterium (Bacillus megaterium).